Here is a 215-residue protein sequence, read N- to C-terminus: Pyrrolidone-carboxylate peptidase (215 aa).

Residues Glu78, Cys141, and His165 contribute to the active site.

This sequence belongs to the peptidase C15 family. In terms of assembly, homotetramer.

It is found in the cytoplasm. The catalysed reaction is Release of an N-terminal pyroglutamyl group from a polypeptide, the second amino acid generally not being Pro.. In terms of biological role, removes 5-oxoproline from various penultimate amino acid residues except L-proline. In Streptococcus pyogenes serotype M18 (strain MGAS8232), this protein is Pyrrolidone-carboxylate peptidase.